The following is a 52-amino-acid chain: Large ribosomal subunit protein bL33 (52 aa).

Belongs to the bacterial ribosomal protein bL33 family.

In Campylobacter jejuni subsp. doylei (strain ATCC BAA-1458 / RM4099 / 269.97), this protein is Large ribosomal subunit protein bL33.